The following is an 86-amino-acid chain: Small ribosomal subunit protein uS17 (86 aa).

This sequence belongs to the universal ribosomal protein uS17 family. In terms of assembly, part of the 30S ribosomal subunit.

One of the primary rRNA binding proteins, it binds specifically to the 5'-end of 16S ribosomal RNA. This is Small ribosomal subunit protein uS17 from Dehalococcoides mccartyi (strain ATCC BAA-2266 / KCTC 15142 / 195) (Dehalococcoides ethenogenes (strain 195)).